The sequence spans 256 residues: Small ribosomal subunit protein eS1 (256 aa).

An N-acetylalanine; partial modification is found at Ala2.

This sequence belongs to the eukaryotic ribosomal protein eS1 family. Component of the small ribosomal subunit. Mature ribosomes consist of a small (40S) and a large (60S) subunit. The 40S subunit contains about 33 different proteins and 1 molecule of RNA (18S). The 60S subunit contains about 49 different proteins and 3 molecules of RNA (25S, 5.8S and 5S).

It localises to the cytoplasm. This chain is Small ribosomal subunit protein eS1, found in Coprinopsis cinerea (strain Okayama-7 / 130 / ATCC MYA-4618 / FGSC 9003) (Inky cap fungus).